Reading from the N-terminus, the 337-residue chain is MIDLRLPLTDIHRHLDGNIRAQSILELGRQYNIALPASDLDALRPHVQVTKNEPDLLSFLQKLDWGVAVLGSLDACRRVAYENVEDAMNAGLDYAELRFSPYYMAMNHKLPIAGVVEAVIDGITAGSRDFDTDIRLIGIMSRTFGTEACQQELDALLSQRDRIVALDLAGDELGYPGAQFTSHFQQARDAGWHITVHAGEAAGPESIWQAINHLGAERIGHGVTAIIDPRLMTHMAETGIGIESCLTSNIQTSTVETLDKHPLIHFLRYGIPATINTDDPAVQGIEIRHEYEVAAPLAGLTAVETRKAQENGLNIAFISEQEKQQLREKVLRKRASA.

Positions 12 and 14 each coordinate Zn(2+). Substrate-binding residues include histidine 14, aspartate 16, and glycine 170. Histidine 197 contributes to the Zn(2+) binding site. The Proton donor role is filled by glutamate 200. Aspartate 278 is a Zn(2+) binding site. Residue aspartate 279 participates in substrate binding.

The protein belongs to the metallo-dependent hydrolases superfamily. Adenosine and AMP deaminases family. Adenosine deaminase subfamily. Zn(2+) serves as cofactor.

The catalysed reaction is adenosine + H2O + H(+) = inosine + NH4(+). It carries out the reaction 2'-deoxyadenosine + H2O + H(+) = 2'-deoxyinosine + NH4(+). In terms of biological role, catalyzes the hydrolytic deamination of adenosine and 2-deoxyadenosine. In Pectobacterium atrosepticum (strain SCRI 1043 / ATCC BAA-672) (Erwinia carotovora subsp. atroseptica), this protein is Adenosine deaminase.